Here is a 2028-residue protein sequence, read N- to C-terminus: MSSFLRGGHLLSGVESLTPTTHRDTITAPIVESLATPLRRSLERYPWSIPKEFHSFLHTCGVDISGFGHAAHPHPVHKTIETHLLLDVWPNYARGPSDVMFIKPEKFAKLQSRQPNFAHLINYRLVPKDTTRYPSTSTNLPDCETVFMHDALMYYTPGQIADLFFLCPQLQKIYASVVVPAESSFTHLSLHPELYRFRFQGSDLVYEPEGNPAANYTQPRSALDWLQTTGFTVGHEFFSVTLLDSFGPVHSLLIQRGRPPVFQAEDIASFRVPDAVALPAPASLHQDLRHRLVPRKVYDALFNYVRAVRTLRVTDPAGFVRTQVGKPEYSWVTSSAWDNLQHFALQTAAVRPNTSHPLFQSPFARLSHWLRTHTWALWCLASPSASVSAWATASALGRLLPLHTDRLRLFGFDIIGRRFWPRLPFHGPEPRFLWETHPACRPPVLFADSAFECQILAGLANRCSPSPFWSRLFPTASPPSWVAYSALALAAVPLAALALRWFYGPDSPQALHDQYHATFHPDPWTLDLPRRLRRFERESFMRTGSAPLPLSLPPPEGSLLPVEPPLAPSDPEPALEPSPPAASVPAPAPAPASEPPPSPESVAPPVAVVAPAVQPARAPSPSPALLGAELRFGDLPPVSAWDSDPEISKLGESTQGTVFAVTPGPRAPEPDTARLDADPSASGPVMEFRELQKGAYIEPTGAFLTRARNSVSSSIPYPTRAACLLVAVSQATGLPTRTLWAALCANLPDSVLDDGSLATLGLTTDHFAVLARIFSLRCRFVSEHGDVELGLHDATSRFTIRHTPGHFELVADNFSLPALVGASSVPGADLAEACKRFVAPDRTVLPFRDVHIHRTDVRRAKNLISNMKNGFDGVMAQANPLDPKSARERFLMLDSCLDIAAPRRVRLIHIAGFAGCGKSWPISHLLRTPAFRVFKLAVPTTELRDEWKALMDPRDQDKWRFGTWESSLLKTARVLVIDEVYKMPRGYLDLAIHADAAIQFVILLGDPIQGEYHSTHPSSSNARLSPEHRYLRPYVDFYCFWSRRIPQNVARVLDVPTTSTEMGFARYSQQFPFFGKILISARDSAKSLADCGYHAVTIASSQGSTIAGPAYVHLDNHSRRLSHQHSLVAITRSKSGIVFTGDKAAADGTSSANLLFSAVLLDRRLSVRSLFSALLPCCPFVTEPPTSRAVLLRGAGYGVARPLRARDAPPLGPDYVGDVILDSSAPILGDGSANAPQVSTHFLPETRRPLHFDIPSARHQVADHPLAPDHSACAIEPVYPGESFESLASLFLPPTDAESKETYFRGEMSNQFPHLDKPFELGAQTSSLLAPLHNSKHDPTLLPASIGKRLRFRHSEAPYVIAPRDEILGSLLYAAACRAYHRSPRDVEPFDPDLYAECINLNEFAQLSSKTQATIMANANRSDPDWRWSAVRIFAKTQHKVNEGSLFGSWKACQTLALMHDAVVLLLGPVKKYQRFFDQRDRPSTLYVHAGHTPFEMADWCRAHLTPAVKLANDYTAFDQSQHGEAVVFERYKMNRLSIPAELVDLHVYLKTNVSTQFGPLTCMRLTGEPGTYDDNTDYNIAVLHLEYAVGSTPLMVSGDDSLLDSEPPVRDQWSAIAPMLALTFKKERGRYATFCGYYVGFTGAVRSPPALFAKLMIAVDDGSISDKLIAYLTEFTVGHSSGDAFWTILPVEAVPYQSACFDFFCRRAPAQAKVMLRLGEAPESLLSLAFEGLKWASHSVYALMNSSHRRQLLHSSRRPRSLPEDPEVSQLQGELLHQFQSLHLPLRGGHMPNPLAALFRLLQQSSSLGPTYAVAPIARAPQVLPPSMADNATQVGPVPPRDDRVDRQPPLPDPPRVLETAPSHFLDLPFQWKVTDFTGYAAYHGTDDLSASAVLTTLCAPYRHAELLYVEISVAPCPPSFSKPIMFTVVWTPATLSPADGKETDYYGGRQITVGGPVMLSSTTAVPADLARMNPFIKSSVSYNDTPRWTMSVPAVTGGDTKIPLATAFVRGIVRVSAPSGAATPSA.

One can recognise an Alphavirus-like MT domain in the interval 65–226; that stretch reads SGFGHAAHPH…TQPRSALDWL (162 aa). Disordered stretches follow at residues 544–603 and 661–682; these read GSAP…ESVA and VTPGPRAPEPDTARLDADPSAS. Residues 550–599 are compositionally biased toward pro residues; the sequence is LSLPPPEGSLLPVEPPLAPSDPEPALEPSPPAASVPAPAPAPASEPPPSP. A compositionally biased stretch (basic and acidic residues) spans 668-677; it reads PEPDTARLDA. The Peptidase C21 domain maps to 669–824; the sequence is EPDTARLDAD…SLPALVGASS (156 aa). Residues Cys723 and His806 each act as for protease activity in the active site. The region spanning 882 to 1039 is the (+)RNA virus helicase ATP-binding domain; that stretch reads DPKSARERFL…YLRPYVDFYC (158 aa). Residues 1040 to 1172 enclose the (+)RNA virus helicase C-terminal domain; that stretch reads FWSRRIPQNV…RRLSVRSLFS (133 aa). Residues 1508–1614 enclose the RdRp catalytic domain; it reads AVKLANDYTA…DSEPPVRDQW (107 aa). Positions 1828-1854 are disordered; it reads SMADNATQVGPVPPRDDRVDRQPPLPD.

It belongs to the Tymoviridae non-structural replication polyprotein family. In terms of processing, specific enzymatic cleavages by the host yield mature proteins.

It is found in the virion. It carries out the reaction RNA(n) + a ribonucleoside 5'-triphosphate = RNA(n+1) + diphosphate. It catalyses the reaction Thiol-dependent hydrolysis of ester, thioester, amide, peptide and isopeptide bonds formed by the C-terminal Gly of ubiquitin (a 76-residue protein attached to proteins as an intracellular targeting signal).. Functionally, acts as a cysteine protease, methyltransferase and deubiquitinase. The cysteine protease activity cleaves the polyprotein giving rise to mature proteins. The methyltransferase domain is probably involved in viral RNA capping. The deubiquitylating activity counteracts the degradation of the viral polymerase mediated by the host ubiquitin-proteasome system. The polymerase is thus stabilized and infectivity is increased. Its function is as follows. RNA-directed RNA polymerase is responsible for the replication and transcription of the genome. In terms of biological role, capsid protein CP1 and CP2 assemble to form an icosahedral capsid, about 30 nm in diameter, and consisting of capsid proteins CP1 and CP2 in a 1:3 ratio. The capsid encapsulates the single-stranded RNA genome. While CP1 is produced as a C-terminal fusion of the replication protein, CP2 may be expressed from a 3'-co-terminal subgenomic RNA. The chain is Genome polyprotein from Zea mays (Maize).